The chain runs to 156 residues: Cyclin-dependent protein kinase inhibitor SMR10 (156 aa).

Positions 52–90 (QDQDLEPKSQETNNCSRKEGATVKKEEEEEDDYCKTPTR) are disordered. Residues 67 to 77 (SRKEGATVKKE) are compositionally biased toward basic and acidic residues.

Probable cyclin-dependent protein kinase (CDK) inhibitor that functions as a repressor of mitosis in the endoreduplication cell cycle. The sequence is that of Cyclin-dependent protein kinase inhibitor SMR10 from Arabidopsis thaliana (Mouse-ear cress).